Consider the following 65-residue polypeptide: Stress-associated endoplasmic reticulum protein 2 (65 aa).

A helical membrane pass occupies residues 38-58; it reads GPWLLALFVFVVCGSAIFQII.

The protein belongs to the RAMP4 family. In terms of assembly, interacts with SEC61B, SEC61A1 and the SEC61 complex. Interacts with CANX.

It localises to the membrane. Its subcellular location is the endoplasmic reticulum membrane. Interacts with target proteins during their translocation into the lumen of the endoplasmic reticulum. Protects unfolded target proteins against degradation during ER stress. May facilitate glycosylation of target proteins after termination of ER stress. May modulate the use of N-glycosylation sites on target proteins. This chain is Stress-associated endoplasmic reticulum protein 2 (SERP2), found in Bos taurus (Bovine).